The chain runs to 336 residues: Holliday junction branch migration complex subunit RuvB (336 aa).

Residues 4 to 184 (ADRLISASGG…FGIVQRLEFY (181 aa)) are large ATPase domain (RuvB-L). ATP is bound by residues Ile23, Arg24, Gly65, Lys68, Thr69, Thr70, 131-133 (EDY), Arg174, Tyr184, and Arg221. Thr69 is a Mg(2+) binding site. Residues 185–255 (NVKDLTDIVA…IAARAMDMLD (71 aa)) form a small ATPAse domain (RuvB-S) region. Positions 258-336 (NEGFDFMDRK…HFGLQRPDEG (79 aa)) are head domain (RuvB-H). Positions 313 and 318 each coordinate DNA.

This sequence belongs to the RuvB family. In terms of assembly, homohexamer. Forms an RuvA(8)-RuvB(12)-Holliday junction (HJ) complex. HJ DNA is sandwiched between 2 RuvA tetramers; dsDNA enters through RuvA and exits via RuvB. An RuvB hexamer assembles on each DNA strand where it exits the tetramer. Each RuvB hexamer is contacted by two RuvA subunits (via domain III) on 2 adjacent RuvB subunits; this complex drives branch migration. In the full resolvosome a probable DNA-RuvA(4)-RuvB(12)-RuvC(2) complex forms which resolves the HJ.

It is found in the cytoplasm. The catalysed reaction is ATP + H2O = ADP + phosphate + H(+). Its function is as follows. The RuvA-RuvB-RuvC complex processes Holliday junction (HJ) DNA during genetic recombination and DNA repair, while the RuvA-RuvB complex plays an important role in the rescue of blocked DNA replication forks via replication fork reversal (RFR). RuvA specifically binds to HJ cruciform DNA, conferring on it an open structure. The RuvB hexamer acts as an ATP-dependent pump, pulling dsDNA into and through the RuvAB complex. RuvB forms 2 homohexamers on either side of HJ DNA bound by 1 or 2 RuvA tetramers; 4 subunits per hexamer contact DNA at a time. Coordinated motions by a converter formed by DNA-disengaged RuvB subunits stimulates ATP hydrolysis and nucleotide exchange. Immobilization of the converter enables RuvB to convert the ATP-contained energy into a lever motion, pulling 2 nucleotides of DNA out of the RuvA tetramer per ATP hydrolyzed, thus driving DNA branch migration. The RuvB motors rotate together with the DNA substrate, which together with the progressing nucleotide cycle form the mechanistic basis for DNA recombination by continuous HJ branch migration. Branch migration allows RuvC to scan DNA until it finds its consensus sequence, where it cleaves and resolves cruciform DNA. The polypeptide is Holliday junction branch migration complex subunit RuvB (Aeromonas hydrophila subsp. hydrophila (strain ATCC 7966 / DSM 30187 / BCRC 13018 / CCUG 14551 / JCM 1027 / KCTC 2358 / NCIMB 9240 / NCTC 8049)).